Here is a 670-residue protein sequence, read N- to C-terminus: DNA ligase (670 aa).

NAD(+) contacts are provided by residues 32-36 (DAEYD), 81-82 (SL), and E111. K113 (N6-AMP-lysine intermediate) is an active-site residue. 4 residues coordinate NAD(+): R134, E171, K290, and K314. C408, C411, C426, and C432 together coordinate Zn(2+). Positions 591 to 670 (EEALSLKGQT…DGLLAVLAGE (80 aa)) constitute a BRCT domain.

This sequence belongs to the NAD-dependent DNA ligase family. LigA subfamily. The cofactor is Mg(2+). Mn(2+) serves as cofactor.

It carries out the reaction NAD(+) + (deoxyribonucleotide)n-3'-hydroxyl + 5'-phospho-(deoxyribonucleotide)m = (deoxyribonucleotide)n+m + AMP + beta-nicotinamide D-nucleotide.. DNA ligase that catalyzes the formation of phosphodiester linkages between 5'-phosphoryl and 3'-hydroxyl groups in double-stranded DNA using NAD as a coenzyme and as the energy source for the reaction. It is essential for DNA replication and repair of damaged DNA. The sequence is that of DNA ligase from Shewanella sediminis (strain HAW-EB3).